Here is an 84-residue protein sequence, read N- to C-terminus: Fulditoxin (84 aa).

Positions 1-21 are cleaved as a signal peptide; it reads MKTLLLTLVVVTIVCLDLGNS. 4 cysteine pairs are disulfide-bonded: cysteine 24-cysteine 41, cysteine 34-cysteine 59, cysteine 63-cysteine 71, and cysteine 72-cysteine 77. Histidine 50 serves as a coordination point for Zn(2+).

Belongs to the three-finger toxin family. Short-chain subfamily. In terms of assembly, homodimer; non-covalently linked. Is able to form a tetramer of dimers in the presence of 2 zinc ions. In terms of tissue distribution, expressed by the venom gland.

The protein localises to the secreted. Postsynaptic neurotoxin that produces potent, and completely reversible, postsynaptic neuromuscular blockade, as well as broad spectrum inhibition of human muscle and neuronal nicotinic acetylcholine receptors (nAChRs). Inhibition is potent or moderate, depending on the receptor (alpha-1-beta-1-delta-epsilon/CHRNA1-CHRNB1-CHRND-CHRNE (IC(50)=2.56 uM), alpha-4-beta-2/CHRNA4-CHRNB2 (IC(50)=1.8 uM), alpha-7/CHRNA7 (IC(50)=7 uM), and alpha-3-beta-2/CHRNA3-CHRNB2 (IC(50)=12.6 uM)). Acts as a competitive antagonist of ACh. Binds to chicken muscle-type nicotinic acetylcholine receptor (AChR) with high potency compared with the cloned human receptor. Unlike short-chain alpha-3FTxs that only bind to muscle nAChRs, this toxin utilizes dimerization to expand its pharmacological targets to block neuronal nAChRs. The protein is Fulditoxin of Micrurus fulvius (Eastern coral snake).